The following is a 351-amino-acid chain: N-acetyl-gamma-glutamyl-phosphate reductase (351 aa).

Residue Cys154 is part of the active site.

This sequence belongs to the NAGSA dehydrogenase family. Type 1 subfamily.

The protein localises to the cytoplasm. The enzyme catalyses N-acetyl-L-glutamate 5-semialdehyde + phosphate + NADP(+) = N-acetyl-L-glutamyl 5-phosphate + NADPH + H(+). Its pathway is amino-acid biosynthesis; L-arginine biosynthesis; N(2)-acetyl-L-ornithine from L-glutamate: step 3/4. Functionally, catalyzes the NADPH-dependent reduction of N-acetyl-5-glutamyl phosphate to yield N-acetyl-L-glutamate 5-semialdehyde. The protein is N-acetyl-gamma-glutamyl-phosphate reductase of Prochlorococcus marinus (strain MIT 9312).